The sequence spans 564 residues: Beta-catenin-like protein 1 homolog (564 aa).

Positions 1–56 (MDVDSIFKNTEETNKKRNPEEADSLEPASSRRRLAEENSDEENEEFDEEGGRFFGS) are disordered. Positions 9–20 (NTEETNKKRNPE) are enriched in basic and acidic residues. Acidic residues predominate over residues 37-48 (ENSDEENEEFDE). Ser-39 bears the Phosphoserine mark. HEAT repeat units lie at residues 83–133 (PTEL…VLSE) and 138–177 (IPIFLKLDCVSTFLELMNHENADITITVLELLIELTDEDV). ARM repeat units lie at residues 179–229 (PDAL…LLSV), 230–276 (DNSI…LANS), 277–326 (KEAK…LVQE), 328–366 (KGKSLFLKEEGIELCILNMKHKGKSRYSTIKVLDYLLFG), and 367–411 (PLST…LFRS). The stretch at 465-528 (EKSTKWFLQQ…DALKNYHENL (64 aa)) forms a coiled coil.

It is found in the nucleus. Probable spliceosomal component involved in the activation of pre-mRNA splicing. The chain is Beta-catenin-like protein 1 homolog (ctnnbl1) from Schizosaccharomyces pombe (strain 972 / ATCC 24843) (Fission yeast).